A 76-amino-acid chain; its full sequence is MRFYIGLMAALMLTSILRTDSASVGQTGTKSELALIERVIRQRDAADVKPVARHNDGPGRDPAPCCQHPIETCCRR.

An N-terminal signal peptide occupies residues 1 to 22; sequence MRFYIGLMAALMLTSILRTDSA. The propeptide occupies 23–42; that stretch reads SVGQTGTKSELALIERVIRQ. Pro-50 bears the 4-hydroxyproline mark. 3 positions are modified to 4-hydroxyproline; partial: Pro-58, Pro-62, and Pro-64.

This sequence belongs to the conotoxin T superfamily. Post-translationally, contains 2 disulfide bonds that can be either 'C1-C3, C2-C4' or 'C1-C4, C2-C3', since these disulfide connectivities have been observed for conotoxins with cysteine framework V (for examples, see AC P0DQQ7 and AC P81755). In terms of tissue distribution, expressed by the venom duct.

Its subcellular location is the secreted. In terms of biological role, probable neurotoxin with unknown target. Possibly targets ion channels. The chain is Conotoxin Cal5a L2 from Californiconus californicus (California cone).